Here is a 214-residue protein sequence, read N- to C-terminus: Adenylate kinase (214 aa).

10–15 (GAGKGT) provides a ligand contact to ATP. The interval 30–59 (STGDMLRAAIKAGSELGNKAKAVMDAGQLV) is NMP. Residues T31, R36, 57-59 (QLV), 85-88 (GFPR), and Q92 each bind AMP. Residues 122–159 (GRRVHSGSGRVYHLVYNPPKVEGKDDVSGDDLSIRPDD) are LID. ATP is bound by residues R123 and 132-133 (VY). The AMP site is built by R156 and R167. An ATP-binding site is contributed by Q200.

Belongs to the adenylate kinase family. In terms of assembly, monomer.

The protein resides in the cytoplasm. The enzyme catalyses AMP + ATP = 2 ADP. It functions in the pathway purine metabolism; AMP biosynthesis via salvage pathway; AMP from ADP: step 1/1. Functionally, catalyzes the reversible transfer of the terminal phosphate group between ATP and AMP. Plays an important role in cellular energy homeostasis and in adenine nucleotide metabolism. This chain is Adenylate kinase, found in Colwellia psychrerythraea (strain 34H / ATCC BAA-681) (Vibrio psychroerythus).